A 313-amino-acid chain; its full sequence is Ribosomal RNA small subunit methyltransferase H (313 aa).

Residues 35 to 37 (GGH), Asp-55, Phe-81, Asp-103, and Gln-110 contribute to the S-adenosyl-L-methionine site.

The protein belongs to the methyltransferase superfamily. RsmH family.

It localises to the cytoplasm. The catalysed reaction is cytidine(1402) in 16S rRNA + S-adenosyl-L-methionine = N(4)-methylcytidine(1402) in 16S rRNA + S-adenosyl-L-homocysteine + H(+). In terms of biological role, specifically methylates the N4 position of cytidine in position 1402 (C1402) of 16S rRNA. The chain is Ribosomal RNA small subunit methyltransferase H from Azotobacter vinelandii (strain DJ / ATCC BAA-1303).